A 297-amino-acid chain; its full sequence is Tumor necrosis factor receptor superfamily member 27 (297 aa).

Residues 1–138 (MDCQENEYRD…AHTVPPREAT (138 aa)) are Extracellular-facing. TNFR-Cys repeat units follow at residues 2–41 (DCQE…DAHC), 43–83 (VCPP…NAIC), and 85–118 (DCLP…EVQC). 8 cysteine pairs are disulfide-bonded: Cys3-Cys15, Cys18-Cys31, Cys21-Cys41, Cys44-Cys58, Cys61-Cys75, Cys64-Cys83, Cys86-Cys104, and Cys107-Cys118. Residues Asn74 and Asn77 are each glycosylated (N-linked (GlcNAc...) asparagine). The chain crosses the membrane as a helical; Signal-anchor for type III membrane protein span at residues 139–159 (LVALVGSLLVVFALAFLGLFF). Residues 160 to 297 (LYCKQIFNRH…LYVPFEVPSL (138 aa)) lie on the Cytoplasmic side of the membrane.

In terms of assembly, associates with TRAF1, TRAF3 and TRAF6.

Its subcellular location is the membrane. Its function is as follows. Receptor for EDA isoform A2, but not for EDA isoform A1. Mediates the activation of the NF-kappa-B and JNK pathways. Activation seems to be mediated by binding to TRAF3 and TRAF6. The sequence is that of Tumor necrosis factor receptor superfamily member 27 (Eda2r) from Mus musculus (Mouse).